The sequence spans 241 residues: Small ribosomal subunit protein uS2 (241 aa).

It belongs to the universal ribosomal protein uS2 family.

This Escherichia coli (strain 55989 / EAEC) protein is Small ribosomal subunit protein uS2.